Here is a 287-residue protein sequence, read N- to C-terminus: Putative esterase/lipase HI_0193 (287 aa).

The AB hydrolase-1 domain occupies 47–273; the sequence is PVLIFIHGLF…SGHWVHAEKP (227 aa). Residues Ser-119 and His-266 contribute to the active site.

It belongs to the DmpD/TodF/XylF esterase family.

The protein is Putative esterase/lipase HI_0193 of Haemophilus influenzae (strain ATCC 51907 / DSM 11121 / KW20 / Rd).